Reading from the N-terminus, the 425-residue chain is Enolase (425 aa).

Q163 contributes to the (2R)-2-phosphoglycerate binding site. E205 serves as the catalytic Proton donor. Mg(2+) contacts are provided by D242, E285, and D312. K337, R366, S367, and K388 together coordinate (2R)-2-phosphoglycerate. Residue K337 is the Proton acceptor of the active site.

The protein belongs to the enolase family. Mg(2+) is required as a cofactor.

It localises to the cytoplasm. It is found in the secreted. The protein localises to the cell surface. It carries out the reaction (2R)-2-phosphoglycerate = phosphoenolpyruvate + H2O. The protein operates within carbohydrate degradation; glycolysis; pyruvate from D-glyceraldehyde 3-phosphate: step 4/5. Catalyzes the reversible conversion of 2-phosphoglycerate (2-PG) into phosphoenolpyruvate (PEP). It is essential for the degradation of carbohydrates via glycolysis. The chain is Enolase from Jannaschia sp. (strain CCS1).